A 233-amino-acid polypeptide reads, in one-letter code: Orotidine 5'-phosphate decarboxylase (233 aa).

Residues Asp-11, Lys-34, 61–70 (DLKLHDIPNT), Thr-117, Arg-179, Gln-189, Gly-209, and Arg-210 contribute to the substrate site. The Proton donor role is filled by Lys-63.

It belongs to the OMP decarboxylase family. Type 1 subfamily. In terms of assembly, homodimer.

It catalyses the reaction orotidine 5'-phosphate + H(+) = UMP + CO2. It participates in pyrimidine metabolism; UMP biosynthesis via de novo pathway; UMP from orotate: step 2/2. Catalyzes the decarboxylation of orotidine 5'-monophosphate (OMP) to uridine 5'-monophosphate (UMP). The sequence is that of Orotidine 5'-phosphate decarboxylase from Streptococcus agalactiae serotype V (strain ATCC BAA-611 / 2603 V/R).